The following is a 431-amino-acid chain: tRNA(Ile)-lysidine synthase (431 aa).

19–24 provides a ligand contact to ATP; sequence STGIDS.

It belongs to the tRNA(Ile)-lysidine synthase family.

Its subcellular location is the cytoplasm. It carries out the reaction cytidine(34) in tRNA(Ile2) + L-lysine + ATP = lysidine(34) in tRNA(Ile2) + AMP + diphosphate + H(+). In terms of biological role, ligates lysine onto the cytidine present at position 34 of the AUA codon-specific tRNA(Ile) that contains the anticodon CAU, in an ATP-dependent manner. Cytidine is converted to lysidine, thus changing the amino acid specificity of the tRNA from methionine to isoleucine. The polypeptide is tRNA(Ile)-lysidine synthase (Staphylococcus aureus (strain COL)).